A 414-amino-acid polypeptide reads, in one-letter code: 4-hydroxy-3-methylbut-2-en-1-yl diphosphate synthase (flavodoxin) (414 aa).

The [4Fe-4S] cluster site is built by Cys304, Cys307, Cys350, and Glu357.

The protein belongs to the IspG family. It depends on [4Fe-4S] cluster as a cofactor.

It catalyses the reaction (2E)-4-hydroxy-3-methylbut-2-enyl diphosphate + oxidized [flavodoxin] + H2O + 2 H(+) = 2-C-methyl-D-erythritol 2,4-cyclic diphosphate + reduced [flavodoxin]. Its pathway is isoprenoid biosynthesis; isopentenyl diphosphate biosynthesis via DXP pathway; isopentenyl diphosphate from 1-deoxy-D-xylulose 5-phosphate: step 5/6. Its function is as follows. Converts 2C-methyl-D-erythritol 2,4-cyclodiphosphate (ME-2,4cPP) into 1-hydroxy-2-methyl-2-(E)-butenyl 4-diphosphate. The polypeptide is 4-hydroxy-3-methylbut-2-en-1-yl diphosphate synthase (flavodoxin) (Aromatoleum aromaticum (strain DSM 19018 / LMG 30748 / EbN1) (Azoarcus sp. (strain EbN1))).